The following is a 573-amino-acid chain: DNA ligase (573 aa).

E250 is a binding site for ATP. Residue K252 is the N6-AMP-lysine intermediate of the active site. ATP-binding residues include R257, R272, E301, F342, R432, and K438.

Belongs to the ATP-dependent DNA ligase family. Requires Mg(2+) as cofactor.

It carries out the reaction ATP + (deoxyribonucleotide)n-3'-hydroxyl + 5'-phospho-(deoxyribonucleotide)m = (deoxyribonucleotide)n+m + AMP + diphosphate.. Its function is as follows. DNA ligase that seals nicks in double-stranded DNA during DNA replication, DNA recombination and DNA repair. The polypeptide is DNA ligase (Methanococcus maripaludis (strain DSM 14266 / JCM 13030 / NBRC 101832 / S2 / LL)).